Reading from the N-terminus, the 294-residue chain is 4-hydroxy-tetrahydrodipicolinate synthase (294 aa).

Pyruvate is bound at residue Thr-45. The active-site Proton donor/acceptor is Tyr-133. The Schiff-base intermediate with substrate role is filled by Lys-162. Ile-204 provides a ligand contact to pyruvate.

This sequence belongs to the DapA family. As to quaternary structure, homotetramer; dimer of dimers.

The protein localises to the cytoplasm. It carries out the reaction L-aspartate 4-semialdehyde + pyruvate = (2S,4S)-4-hydroxy-2,3,4,5-tetrahydrodipicolinate + H2O + H(+). It functions in the pathway amino-acid biosynthesis; L-lysine biosynthesis via DAP pathway; (S)-tetrahydrodipicolinate from L-aspartate: step 3/4. Functionally, catalyzes the condensation of (S)-aspartate-beta-semialdehyde [(S)-ASA] and pyruvate to 4-hydroxy-tetrahydrodipicolinate (HTPA). The sequence is that of 4-hydroxy-tetrahydrodipicolinate synthase from Rhizobium meliloti (strain 1021) (Ensifer meliloti).